Consider the following 340-residue polypeptide: 4-hydroxy-2-oxovalerate aldolase (340 aa).

The Pyruvate carboxyltransferase domain occupies 4 to 255; sequence VVIHDPTLRD…ATGIDLYALL (252 aa). Substrate is bound at residue 12–13; the sequence is RD. Asp13 is a Mn(2+) binding site. Catalysis depends on His16, which acts as the Proton acceptor. Residues Ser166 and His194 each contribute to the substrate site. Residues His194 and His196 each coordinate Mn(2+).

It belongs to the 4-hydroxy-2-oxovalerate aldolase family.

The catalysed reaction is (S)-4-hydroxy-2-oxopentanoate = acetaldehyde + pyruvate. This is 4-hydroxy-2-oxovalerate aldolase from Streptomyces griseus subsp. griseus (strain JCM 4626 / CBS 651.72 / NBRC 13350 / KCC S-0626 / ISP 5235).